The primary structure comprises 249 residues: Structural protein VP10 (249 aa).

It is found in the virion. Its function is as follows. Forms the virion spike 'foot' and helps anchor the VP9 spike 'head' protein in the virion. The chain is Structural protein VP10 (Segment-10) from Banna virus (BAV).